The chain runs to 715 residues: ATP-dependent DNA helicase Hel308 (715 aa).

Residues 8-36 (MPIEDLKLPSNVIEIIKKRGIKKLNPPQT) carry the Q motif motif. Residues Q35 and 53 to 60 (SPTGSGKT) contribute to the ATP site. The Helicase ATP-binding domain occupies 40 to 203 (KKGLLEGNRL…WLGAEPVATN (164 aa)). Positions 152–155 (DELH) match the DEAH box motif. Residues 236–442 (HGDDAIIAYT…ERAFYTFLLG (207 aa)) form the Helicase C-terminal domain.

Belongs to the helicase family. Hel308 subfamily. In terms of assembly, monomer.

It carries out the reaction Couples ATP hydrolysis with the unwinding of duplex DNA by translocating in the 3'-5' direction.. The enzyme catalyses ATP + H2O = ADP + phosphate + H(+). Its function is as follows. DNA-dependent ATPase and 3'-5' DNA helicase that may be involved in repair of stalled replication forks. A low processivity 3'-5' helicase. Unwinds short dsDNA substrates with 3'-overhangs (25 bp dsDNA with 25 base overhang), less active on longer dsDNA substrates. Also unwinds the lagging strand of a stalled replication fork (but the leading strand was not tested). Binds ssDNA, but dsDNA about 35-fold less well. Able to displace streptavidin from biotinylated ssDNA, which is partially inhibited by DNA-binding proteins, suggesting it may play a role in stripping proteins from stalled replication forks. This Saccharolobus solfataricus (strain 98/2) (Sulfolobus solfataricus) protein is ATP-dependent DNA helicase Hel308.